The primary structure comprises 635 residues: ATP-dependent zinc metalloprotease FtsH (635 aa).

Topologically, residues 1 to 4 (MVKN) are cytoplasmic. A helical transmembrane segment spans residues 5 to 25 (LVLWVVVAVIMMTAYQSFNSS). Over 26–97 (SVENSTDYTT…VEGTPFERRG (72 aa)) the chain is Periplasmic. The helical transmembrane segment at 98–118 (FLSQILISWFPMLFLVGVWVF) threads the bilayer. Residues 119–635 (FMRQMQGGGG…AVENTDDFNV (517 aa)) lie on the Cytoplasmic side of the membrane. 191-198 (GPPGTGKT) contributes to the ATP binding site. Residue H413 participates in Zn(2+) binding. The active site involves E414. The Zn(2+) site is built by H417 and D491. Residues 593-635 (NREPVTPPSGWGEPKTQQAAYANSTTNDTKPESAVENTDDFNV) form a disordered region. Positions 607 to 620 (KTQQAAYANSTTND) are enriched in polar residues.

In the central section; belongs to the AAA ATPase family. The protein in the C-terminal section; belongs to the peptidase M41 family. As to quaternary structure, homohexamer. Zn(2+) serves as cofactor.

It is found in the cell inner membrane. Functionally, acts as a processive, ATP-dependent zinc metallopeptidase for both cytoplasmic and membrane proteins. Plays a role in the quality control of integral membrane proteins. The chain is ATP-dependent zinc metalloprotease FtsH from Haemophilus influenzae (strain ATCC 51907 / DSM 11121 / KW20 / Rd).